A 131-amino-acid polypeptide reads, in one-letter code: MHTQQLISQIESQYLKDNLPEICVGDTVKVGVLIQEEDNKNSGEKERIQFYEGVVISLSKLKNINGTIRVRRILQGIGIERTFLVHSPLIKSINIIRRSKVRRAKLYYLRTLTGKATRLKQRLIKHYRLIY.

It belongs to the bacterial ribosomal protein bL19 family.

It localises to the plastid. The protein localises to the cyanelle. In terms of biological role, this protein is located at the 30S-50S ribosomal subunit interface and may play a role in the structure and function of the aminoacyl-tRNA binding site. The sequence is that of Large ribosomal subunit protein bL19c (rpl19) from Cyanophora paradoxa.